Consider the following 541-residue polypeptide: Anthranilate synthase component 1 (541 aa).

L-tryptophan contacts are provided by residues Ser-61 and 311–313 (PYM). Residue 348 to 349 (GT) coordinates chorismate. Glu-381 is a binding site for Mg(2+). Residues Tyr-469, Arg-489, 503 to 505 (GAG), and Gly-505 each bind chorismate. Residue Glu-518 coordinates Mg(2+).

This sequence belongs to the anthranilate synthase component I family. In terms of assembly, heterotetramer consisting of two non-identical subunits: a beta subunit (TrpG) and a large alpha subunit (TrpE). Requires Mg(2+) as cofactor.

The enzyme catalyses chorismate + L-glutamine = anthranilate + pyruvate + L-glutamate + H(+). It functions in the pathway amino-acid biosynthesis; L-tryptophan biosynthesis; L-tryptophan from chorismate: step 1/5. With respect to regulation, feedback inhibited by tryptophan. Part of a heterotetrameric complex that catalyzes the two-step biosynthesis of anthranilate, an intermediate in the biosynthesis of L-tryptophan. In the first step, the glutamine-binding beta subunit (TrpG) of anthranilate synthase (AS) provides the glutamine amidotransferase activity which generates ammonia as a substrate that, along with chorismate, is used in the second step, catalyzed by the large alpha subunit of AS (TrpE) to produce anthranilate. In the absence of TrpG, TrpE can synthesize anthranilate directly from chorismate and high concentrations of ammonia. The sequence is that of Anthranilate synthase component 1 (trpE) from Vibrio parahaemolyticus serotype O3:K6 (strain RIMD 2210633).